The chain runs to 78 residues: MLDENKMKRINELAQKKKATGLTDQEGKEQTLLRKEYLQSFRQSFKKTIENTTVIDPEGNDVTPDKVKEIQKLNNIRK.

Belongs to the UPF0291 family.

It localises to the cytoplasm. The polypeptide is UPF0291 protein MCCL_0996 (Macrococcus caseolyticus (strain JCSC5402) (Macrococcoides caseolyticum)).